The primary structure comprises 388 residues: Succinate--CoA ligase [ADP-forming] subunit beta (388 aa).

The ATP-grasp domain maps to 9-244 (KQLFAEYGLP…PSQEDEREAH (236 aa)). Residues Lys-46, 53–55 (GRG), Glu-99, Ser-102, and Glu-107 each bind ATP. Mg(2+) is bound by residues Asn-199 and Asp-213. Residues Asn-264 and 321 to 323 (GIV) each bind substrate.

Belongs to the succinate/malate CoA ligase beta subunit family. Heterotetramer of two alpha and two beta subunits. Mg(2+) serves as cofactor.

The catalysed reaction is succinate + ATP + CoA = succinyl-CoA + ADP + phosphate. It catalyses the reaction GTP + succinate + CoA = succinyl-CoA + GDP + phosphate. The protein operates within carbohydrate metabolism; tricarboxylic acid cycle; succinate from succinyl-CoA (ligase route): step 1/1. Functionally, succinyl-CoA synthetase functions in the citric acid cycle (TCA), coupling the hydrolysis of succinyl-CoA to the synthesis of either ATP or GTP and thus represents the only step of substrate-level phosphorylation in the TCA. The beta subunit provides nucleotide specificity of the enzyme and binds the substrate succinate, while the binding sites for coenzyme A and phosphate are found in the alpha subunit. The polypeptide is Succinate--CoA ligase [ADP-forming] subunit beta (Aliivibrio salmonicida (strain LFI1238) (Vibrio salmonicida (strain LFI1238))).